The following is a 613-amino-acid chain: DNA mismatch repair protein MutL (613 aa).

It belongs to the DNA mismatch repair MutL/HexB family.

Its function is as follows. This protein is involved in the repair of mismatches in DNA. It is required for dam-dependent methyl-directed DNA mismatch repair. May act as a 'molecular matchmaker', a protein that promotes the formation of a stable complex between two or more DNA-binding proteins in an ATP-dependent manner without itself being part of a final effector complex. This Janthinobacterium sp. (strain Marseille) (Minibacterium massiliensis) protein is DNA mismatch repair protein MutL.